A 176-amino-acid chain; its full sequence is Inner membrane-spanning protein YciB (176 aa).

5 helical membrane-spanning segments follow: residues 24–44, 49–69, 76–96, 121–141, and 149–169; these read TATAVAIGATLVQIAWVAFRH, PMLWVSLGVVTVFGGATLVLH, WKPTVLYWAFSVVLVVSALGF, YVWAVFFVLLGILNLFVAYNF, and FKLFGATGCLVVFIVGQSLWL.

This sequence belongs to the YciB family.

It is found in the cell inner membrane. Plays a role in cell envelope biogenesis, maintenance of cell envelope integrity and membrane homeostasis. In Paraburkholderia phymatum (strain DSM 17167 / CIP 108236 / LMG 21445 / STM815) (Burkholderia phymatum), this protein is Inner membrane-spanning protein YciB.